The chain runs to 230 residues: Orotidine 5'-phosphate decarboxylase (230 aa).

Residues D11, K34, 61–70 (DLKLHDIPNT), T117, R179, Q188, G208, and R209 contribute to the substrate site. K63 acts as the Proton donor in catalysis.

It belongs to the OMP decarboxylase family. Type 1 subfamily. Homodimer.

It catalyses the reaction orotidine 5'-phosphate + H(+) = UMP + CO2. It functions in the pathway pyrimidine metabolism; UMP biosynthesis via de novo pathway; UMP from orotate: step 2/2. Its function is as follows. Catalyzes the decarboxylation of orotidine 5'-monophosphate (OMP) to uridine 5'-monophosphate (UMP). In Streptococcus pyogenes serotype M49 (strain NZ131), this protein is Orotidine 5'-phosphate decarboxylase.